A 212-amino-acid chain; its full sequence is ATP synthase F(0) complex subunit a (212 aa).

The next 6 membrane-spanning stretches (helical) occupy residues 3–23, 58–78, 87–107, 128–148, 169–189, and 192–212; these read MMGIPLILIAIFLPTLLIYTS, WAAMLMTLMIXLLSMNLLGLL, QLSMNMALAIPLWLATVLTGL, IPLLIIIETVSLFIRPLALGV, FVLLPMMTLTALSTFIVLVLL, and LEIAVAMIQAYVFTLLLTLYL.

Belongs to the ATPase A chain family. In terms of assembly, component of the ATP synthase complex composed at least of ATP5F1A/subunit alpha, ATP5F1B/subunit beta, ATP5MC1/subunit c (homooctomer), MT-ATP6/subunit a, MT-ATP8/subunit 8, ATP5ME/subunit e, ATP5MF/subunit f, ATP5MG/subunit g, ATP5MK/subunit k, ATP5MJ/subunit j, ATP5F1C/subunit gamma, ATP5F1D/subunit delta, ATP5F1E/subunit epsilon, ATP5PF/subunit F6, ATP5PB/subunit b, ATP5PD/subunit d, ATP5PO/subunit OSCP. ATP synthase complex consists of a soluble F(1) head domain (subunits alpha(3) and beta(3)) - the catalytic core - and a membrane F(0) domain - the membrane proton channel (subunits c, a, 8, e, f, g, k and j). These two domains are linked by a central stalk (subunits gamma, delta, and epsilon) rotating inside the F1 region and a stationary peripheral stalk (subunits F6, b, d, and OSCP). Interacts with DNAJC30; interaction is direct.

It is found in the mitochondrion inner membrane. It carries out the reaction H(+)(in) = H(+)(out). Subunit a, of the mitochondrial membrane ATP synthase complex (F(1)F(0) ATP synthase or Complex V) that produces ATP from ADP in the presence of a proton gradient across the membrane which is generated by electron transport complexes of the respiratory chain. ATP synthase complex consist of a soluble F(1) head domain - the catalytic core - and a membrane F(1) domain - the membrane proton channel. These two domains are linked by a central stalk rotating inside the F(1) region and a stationary peripheral stalk. During catalysis, ATP synthesis in the catalytic domain of F(1) is coupled via a rotary mechanism of the central stalk subunits to proton translocation. With the subunit c (ATP5MC1), forms the proton-conducting channel in the F(0) domain, that contains two crucial half-channels (inlet and outlet) that facilitate proton movement from the mitochondrial intermembrane space (IMS) into the matrix. Protons are taken up via the inlet half-channel and released through the outlet half-channel, following a Grotthuss mechanism. The sequence is that of ATP synthase F(0) complex subunit a from Tropidurus hispidus (Peters' lava lizard).